The chain runs to 862 residues: Active breakpoint cluster region-related protein (862 aa).

Positions 29–84 (YDAEGNEEHKNSREGSETMPYIDESPTMSPQLSARSQDSVDGVSPTPTEVLLPGGE) are disordered. The segment covering 34 to 44 (NEEHKNSREGS) has biased composition (basic and acidic residues). The segment covering 54–67 (PTMSPQLSARSQDS) has biased composition (polar residues). Residues 93–286 (MRKLVLSGVL…QNFLSSINED (194 aa)) enclose the DH domain. One can recognise a PH domain in the interval 303–462 (QLVKDGFLVE…WREAIQKLQK (160 aa)). The C2 domain occupies 488–616 (VHNVPIISHK…QSKNWHDDVI (129 aa)). In terms of domain architecture, Rho-GAP spans 650–848 (VKISVVTKRE…YYLQHPPISF (199 aa)).

The protein localises to the cell projection. It localises to the dendritic spine. Its subcellular location is the axon. The protein resides in the synapse. Functionally, protein with a unique structure having two opposing regulatory activities toward small GTP-binding proteins. The C-terminus is a GTPase-activating protein domain which stimulates GTP hydrolysis by RAC1, RAC2 and CDC42. Accelerates the intrinsic rate of GTP hydrolysis of RAC1 or CDC42, leading to down-regulation of the active GTP-bound form. The central Dbl homology (DH) domain functions as guanine nucleotide exchange factor (GEF) that modulates the GTPases CDC42, RHOA and RAC1. Promotes the conversion of CDC42, RHOA and RAC1 from the GDP-bound to the GTP-bound form. The polypeptide is Active breakpoint cluster region-related protein (abr) (Xenopus laevis (African clawed frog)).